The primary structure comprises 123 residues: DNA-directed RNA polymerase subunit omega (123 aa).

The segment at 72–100 (QRVLPSEDEEDAAREERGQQMEALPAPPV) is disordered.

It belongs to the RNA polymerase subunit omega family. As to quaternary structure, the RNAP catalytic core consists of 2 alpha, 1 beta, 1 beta' and 1 omega subunit. When a sigma factor is associated with the core the holoenzyme is formed, which can initiate transcription.

The catalysed reaction is RNA(n) + a ribonucleoside 5'-triphosphate = RNA(n+1) + diphosphate. In terms of biological role, promotes RNA polymerase assembly. Latches the N- and C-terminal regions of the beta' subunit thereby facilitating its interaction with the beta and alpha subunits. In Maricaulis maris (strain MCS10) (Caulobacter maris), this protein is DNA-directed RNA polymerase subunit omega.